We begin with the raw amino-acid sequence, 625 residues long: PTS system beta-glucoside-specific EIIBCA component (625 aa).

The region spanning 1–84 (MTELARKIVA…NSVAGLDEKA (84 aa)) is the PTS EIIB type-1 domain. Over 1–99 (MTELARKIVA…NDDKGNLLNR (99 aa)) the chain is Periplasmic. Cysteine 24 acts as the Phosphocysteine intermediate; for EIIB activity in catalysis. The helical transmembrane segment at 100–120 (FVYVISGIFTPLIGLMAATGI) threads the bilayer. Positions 102–465 (YVISGIFTPL…RQPAQGAPQE (364 aa)) constitute a PTS EIIC type-1 domain. At 121 to 140 (LKGMLALALTFQWTTEQSGT) the chain is on the cytoplasmic side. The helical transmembrane segment at 141–161 (YLILFSASDALFWFFPIILGY) threads the bilayer. The Periplasmic portion of the chain corresponds to 162-166 (TAGKR). The chain crosses the membrane as a helical span at residues 167 to 187 (FGGNPFTAMVIGGALVHPLIL). Residues 188–202 (TAFENGQKADALGLD) are Cytoplasmic-facing. A helical transmembrane segment spans residues 203-223 (FLGIPVTLLNYSSSVIPIIFS). Residues 224–244 (AWLCSILERRLNAWLPSAIKN) are Periplasmic-facing. A helical transmembrane segment spans residues 245 to 265 (FFTPLLCLMVITPVTFLLVGP). Topologically, residues 266–284 (LSTWISELIAAGYLWLYQA) are cytoplasmic. Residues 285-305 (VPAFAGAVMGGFWQIFVMFGL) form a helical membrane-spanning segment. Topologically, residues 306-324 (HWGLVPLCINNFTVLGYDT) are periplasmic. Residues 325–345 (MIPLLMPAIMAQVGAALGVFL) traverse the membrane as a helical segment. The Cytoplasmic segment spans residues 346–353 (CERDAQKK). A helical membrane pass occupies residues 354-374 (VVAGSAALTSLFGITEPAVYG). Over 375–380 (VNLPRK) the chain is Periplasmic. Residues 381–401 (YPFVIACISGALGATIIGYAQ) form a helical membrane-spanning segment. Residues 402–403 (TK) lie on the Cytoplasmic side of the membrane. Residues 404–424 (VYSFGLPSIFTFMQTIPSTGI) form a helical membrane-spanning segment. Residues 425–431 (DFTVWAS) lie on the Periplasmic side of the membrane. The chain crosses the membrane as a helical span at residues 432–452 (VIGGVIAIGCAFVGTVMLHFI). At 453-625 (TAKRQPAQGA…AGEPLLSIIR (173 aa)) the chain is on the cytoplasmic side. In terms of domain architecture, PTS EIIA type-1 spans 495–599 (DTTFASGLLG…DLTTPVLISN (105 aa)). The active-site Tele-phosphohistidine intermediate; for EIIA activity is the histidine 547.

It localises to the cell inner membrane. The phosphoenolpyruvate-dependent sugar phosphotransferase system (sugar PTS), a major carbohydrate active -transport system, catalyzes the phosphorylation of incoming sugar substrates concomitantly with their translocation across the cell membrane. This system is involved in beta-glucoside transport. In terms of biological role, acts both as a kinase and as a phosphatase on BglG. The protein is PTS system beta-glucoside-specific EIIBCA component (bglF) of Escherichia coli (strain K12).